Reading from the N-terminus, the 99-residue chain is Large ribosomal subunit protein uL23 (99 aa).

The protein belongs to the universal ribosomal protein uL23 family. Part of the 50S ribosomal subunit. Contacts protein L29, and trigger factor when it is bound to the ribosome.

In terms of biological role, one of the early assembly proteins it binds 23S rRNA. One of the proteins that surrounds the polypeptide exit tunnel on the outside of the ribosome. Forms the main docking site for trigger factor binding to the ribosome. The polypeptide is Large ribosomal subunit protein uL23 (Lachnoclostridium phytofermentans (strain ATCC 700394 / DSM 18823 / ISDg) (Clostridium phytofermentans)).